A 236-amino-acid chain; its full sequence is tRNA1(Val) (adenine(37)-N6)-methyltransferase (236 aa).

The protein belongs to the methyltransferase superfamily. tRNA (adenine-N(6)-)-methyltransferase family.

It localises to the cytoplasm. It catalyses the reaction adenosine(37) in tRNA1(Val) + S-adenosyl-L-methionine = N(6)-methyladenosine(37) in tRNA1(Val) + S-adenosyl-L-homocysteine + H(+). Its function is as follows. Specifically methylates the adenine in position 37 of tRNA(1)(Val) (anticodon cmo5UAC). The polypeptide is tRNA1(Val) (adenine(37)-N6)-methyltransferase (Actinobacillus succinogenes (strain ATCC 55618 / DSM 22257 / CCUG 43843 / 130Z)).